The chain runs to 128 residues: uncharacterized protein (128 aa).

2 disordered regions span residues 1-53 (MHLP…PKGR) and 85-105 (PDGPLTRRYAPTSGKPSSGPL).

This is an uncharacterized protein from Escherichia coli.